A 210-amino-acid chain; its full sequence is ATP-dependent Clp protease proteolytic subunit (210 aa).

The Nucleophile role is filled by Ser-113. The active site involves His-138.

The protein belongs to the peptidase S14 family. In terms of assembly, fourteen ClpP subunits assemble into 2 heptameric rings which stack back to back to give a disk-like structure with a central cavity, resembling the structure of eukaryotic proteasomes.

The protein resides in the cytoplasm. It catalyses the reaction Hydrolysis of proteins to small peptides in the presence of ATP and magnesium. alpha-casein is the usual test substrate. In the absence of ATP, only oligopeptides shorter than five residues are hydrolyzed (such as succinyl-Leu-Tyr-|-NHMec, and Leu-Tyr-Leu-|-Tyr-Trp, in which cleavage of the -Tyr-|-Leu- and -Tyr-|-Trp bonds also occurs).. Cleaves peptides in various proteins in a process that requires ATP hydrolysis. Has a chymotrypsin-like activity. Plays a major role in the degradation of misfolded proteins. The polypeptide is ATP-dependent Clp protease proteolytic subunit (Marinomonas sp. (strain MWYL1)).